We begin with the raw amino-acid sequence, 644 residues long: Coiled-coil domain-containing protein 22 homolog (644 aa).

Residues 316 to 341 (DEQKAAAMAGLSESGPPKMDTEEELQ) form a disordered region. Coiled coils occupy residues 333–383 (KMDT…NEQV), 409–486 (DAEN…GKDD), and 592–644 (GVIM…LKSS).

The protein belongs to the CCDC22 family.

This chain is Coiled-coil domain-containing protein 22 homolog, found in Nematostella vectensis (Starlet sea anemone).